Reading from the N-terminus, the 178-residue chain is Probable apo-citrate lyase phosphoribosyl-dephospho-CoA transferase (178 aa).

Belongs to the CitX family.

It carries out the reaction apo-[citrate lyase ACP] + 2'-(5''-triphospho-alpha-D-ribosyl)-3'-dephospho-CoA = holo-[citrate lyase ACP] + diphosphate. Transfers 2-(5''-triphosphoribosyl)-3'-dephosphocoenzyme-A on a serine residue to the apo-acyl carrier protein (gamma chain) of the citrate lyase to yield holo-acyl carrier protein. The chain is Probable apo-citrate lyase phosphoribosyl-dephospho-CoA transferase from Vibrio cholerae serotype O1 (strain ATCC 39541 / Classical Ogawa 395 / O395).